Consider the following 236-residue polypeptide: Sugar fermentation stimulation protein homolog (236 aa).

Belongs to the SfsA family.

This Desulfotalea psychrophila (strain LSv54 / DSM 12343) protein is Sugar fermentation stimulation protein homolog.